The chain runs to 379 residues: Transcription termination factor 1b, mitochondrial (379 aa).

Residues 1–37 (MASRNIWCVRRNFLFDLRGWMLQYSAEVFLKSISFRT) constitute a mitochondrion transit peptide. 5 interaction with DNA regions span residues 151 to 152 (RS), 229 to 233 (QSTKR), 306 to 313 (SEKKFNDK), 337 to 340 (SINT), and 366 to 373 (SQRRYEAK).

It belongs to the mTERF family. Monomer. Post-translationally, phosphoprotein with mostly four phosphate groups. While the DNA-binding activity is unaffected by the phosphorylation state, only the phosphorylated form of the protein is active for termination activity. Functioning seems to be regulated by phosphorylation. Expressed strongly in the heart and at lower levels in brain, liver and kidney.

The protein localises to the mitochondrion. Functionally, transcription termination factor. Binds to a 28 bp region within the tRNA(Leu(uur)) gene at a position immediately adjacent to and downstream of the 16S rRNA gene; this region comprises a tridecamer sequence critical for directing accurate termination. Binds DNA along the major grove and promotes DNA bending and partial unwinding. Promotes base flipping. Transcription termination activity appears to be polarized with highest specificity for transcripts initiated on the light strand. This Mus musculus (Mouse) protein is Transcription termination factor 1b, mitochondrial.